The chain runs to 97 residues: Conotoxin Cal6.1a (97 aa).

An N-terminal signal peptide occupies residues 1-22 (MKLTTVLVVALLVLAACQFTVT). Positions 23–46 (DNSGDDPENPSLRSVGENQNPDST) are disordered. Residues 23-68 (DNSGDDPENPSLRSVGENQNPDSTKTITAWATRDMTNMRRGLNRPS) constitute a propeptide that is removed on maturation. Intrachain disulfides connect Cys71/Cys87, Cys78/Cys91, and Cys86/Cys96.

It belongs to the conotoxin O1 superfamily. Expressed by the venom duct.

It localises to the secreted. Functionally, probable neurotoxin with unknown target. Possibly targets ion channels. In Californiconus californicus (California cone), this protein is Conotoxin Cal6.1a.